A 203-amino-acid chain; its full sequence is Ribosome maturation factor RimP (203 aa).

The disordered stretch occupies residues 184-203; sequence RRGSAPVEDEEGEGEAPTAH.

This sequence belongs to the RimP family.

It localises to the cytoplasm. Required for maturation of 30S ribosomal subunits. This chain is Ribosome maturation factor RimP, found in Methylobacterium nodulans (strain LMG 21967 / CNCM I-2342 / ORS 2060).